Here is a 387-residue protein sequence, read N- to C-terminus: Paralemmin-1 (387 aa).

Residue M1 is modified to N-acetylmethionine. Residues E7 to L104 adopt a coiled-coil conformation. Disordered regions lie at residues R22–E78 and L98–A133. Composition is skewed to basic and acidic residues over residues Q25–Q41 and D69–E78. S116 carries the phosphoserine modification. A compositionally biased stretch (pro residues) spans S116–C125. Residues T142 and T146 each carry the phosphothreonine modification. Position 163 is a phosphoserine (S163). T244 bears the Phosphothreonine mark. S246 carries the post-translational modification Phosphoserine. 2 disordered regions span residues S246 to P297 and A334 to K378. The segment covering G258–I273 has biased composition (basic and acidic residues). The segment covering G286 to P297 has biased composition (low complexity). S346 and S369 each carry phosphoserine. Residues C381 and C383 are each lipidated (S-palmitoyl cysteine). C384 carries the cysteine methyl ester modification. A lipid anchor (S-farnesyl cysteine) is attached at C384. A propeptide spans S385 to M387 (removed in mature form).

The protein belongs to the paralemmin family. As to quaternary structure, interacts with dopamine receptor DRD3. In terms of processing, phosphorylated.

The protein localises to the cell membrane. Its subcellular location is the cell projection. It is found in the filopodium membrane. It localises to the axon. The protein resides in the dendrite. The protein localises to the dendritic spine. Its subcellular location is the basolateral cell membrane. It is found in the apicolateral cell membrane. Functionally, involved in plasma membrane dynamics and cell process formation. Necessary for axonal and dendritic filopodia induction, for dendritic spine maturation and synapse formation in a palmitoylation-dependent manner. The chain is Paralemmin-1 (PALM) from Sus scrofa (Pig).